The primary structure comprises 303 residues: ATP synthase gamma chain (303 aa).

The protein belongs to the ATPase gamma chain family. F-type ATPases have 2 components, CF(1) - the catalytic core - and CF(0) - the membrane proton channel. CF(1) has five subunits: alpha(3), beta(3), gamma(1), delta(1), epsilon(1). CF(0) has three main subunits: a, b and c.

The protein localises to the cell membrane. Functionally, produces ATP from ADP in the presence of a proton gradient across the membrane. The gamma chain is believed to be important in regulating ATPase activity and the flow of protons through the CF(0) complex. This chain is ATP synthase gamma chain, found in Nocardioides sp. (strain ATCC BAA-499 / JS614).